A 549-amino-acid chain; its full sequence is Calcium-dependent protein kinase 5 (549 aa).

Gly-2 is lipidated: N-myristoyl glycine. A disordered region spans residues Asp-43–Gly-69. Residues Arg-52–Ala-64 show a composition bias toward low complexity. A Protein kinase domain is found at Tyr-92–Ile-350. ATP is bound by residues Leu-98–Thr-106 and Lys-121. The active-site Proton acceptor is Asp-216. An autoinhibitory domain region spans residues Ala-356–Ile-386. EF-hand domains are found at residues Glu-393–Thr-428, Leu-429–Leu-464, Glu-465–Pro-500, and Asp-501–Gly-534. The Ca(2+) site is built by Asp-406, Asp-408, Ser-410, Glu-417, Asp-442, Asp-444, Ser-446, Thr-448, Glu-453, Asp-478, Asp-480, Ser-482, Tyr-484, Glu-489, Asp-512, Asp-514, Asp-516, Arg-518, and Glu-523.

It belongs to the protein kinase superfamily. Ser/Thr protein kinase family. CDPK subfamily.

The protein resides in the membrane. The catalysed reaction is L-seryl-[protein] + ATP = O-phospho-L-seryl-[protein] + ADP + H(+). The enzyme catalyses L-threonyl-[protein] + ATP = O-phospho-L-threonyl-[protein] + ADP + H(+). Activated by calcium. Autophosphorylation may play an important role in the regulation of the kinase activity. Functionally, may play a role in signal transduction pathways that involve calcium as a second messenger. The chain is Calcium-dependent protein kinase 5 from Oryza sativa subsp. japonica (Rice).